The primary structure comprises 138 residues: Small ribosomal subunit protein uS12 (138 aa).

Residues 1-20 are disordered; that stretch reads MPTISQLINHGRSAKTSKSK. Asp102 is subject to 3-methylthioaspartic acid. The interval 116 to 138 is disordered; sequence DAAGVDKRKQGRSIYGTKKPKEN.

This sequence belongs to the universal ribosomal protein uS12 family. Part of the 30S ribosomal subunit. Contacts proteins S8 and S17. May interact with IF1 in the 30S initiation complex.

Its function is as follows. With S4 and S5 plays an important role in translational accuracy. In terms of biological role, interacts with and stabilizes bases of the 16S rRNA that are involved in tRNA selection in the A site and with the mRNA backbone. Located at the interface of the 30S and 50S subunits, it traverses the body of the 30S subunit contacting proteins on the other side and probably holding the rRNA structure together. The combined cluster of proteins S8, S12 and S17 appears to hold together the shoulder and platform of the 30S subunit. This chain is Small ribosomal subunit protein uS12, found in Metamycoplasma arthritidis (strain 158L3-1) (Mycoplasma arthritidis).